Here is a 385-residue protein sequence, read N- to C-terminus: MTQAFNERIVQALKQRREQGLNRQSEVIFSGNQTVLEHQGKRYLNFSANDYLGLANDQSLVRAWQQGLSLYGCGSGASPLVTGYTPAHSNLAASLCDWLGYESATLFGSGFSANQALLFALLEKGDLLVQDKLNHASLIEAGLLSPASMKRFKHNDLQALDAILNRSDCPSLVVTEGVFSMDGDCSPLAEMHALTQRYSASLMVDDAHGVGVLGEEGRGSCALASVKPDFLVVTFGKAFGLSGAALLTDKSSGDFLAQFARHHVYSTALPPAQAFALTHAVEMIRTQQWRRDKLNELQTLFAEYLGEHDSFVATQTPIKPWLIGETQQAVMVAQRCREQGIWLTAIRPPTVPQNTARLRITLSANHTKEQMHTLAQVLLTVTGEH.

Arg23 contacts substrate. 110–111 contributes to the pyridoxal 5'-phosphate binding site; that stretch reads GF. His135 is a substrate binding site. The pyridoxal 5'-phosphate site is built by Ser180, His208, and Thr234. Lys237 carries the post-translational modification N6-(pyridoxal phosphate)lysine. Thr350 contributes to the substrate binding site.

This sequence belongs to the class-II pyridoxal-phosphate-dependent aminotransferase family. BioF subfamily. In terms of assembly, homodimer. The cofactor is pyridoxal 5'-phosphate.

The catalysed reaction is 6-carboxyhexanoyl-[ACP] + L-alanine + H(+) = (8S)-8-amino-7-oxononanoate + holo-[ACP] + CO2. It functions in the pathway cofactor biosynthesis; biotin biosynthesis. Catalyzes the decarboxylative condensation of pimeloyl-[acyl-carrier protein] and L-alanine to produce 8-amino-7-oxononanoate (AON), [acyl-carrier protein], and carbon dioxide. The chain is 8-amino-7-oxononanoate synthase from Vibrio vulnificus (strain YJ016).